A 148-amino-acid chain; its full sequence is Protein SOB FIVE-LIKE 1 (148 aa).

Residues M1–S10 are compositionally biased toward basic and acidic residues. Disordered regions lie at residues M1–S20 and N33–K148. An SOFL-A motif is present at residues S20 to Y25. The segment covering D54–M76 has biased composition (acidic residues). The SOFL-B motif lies at S75–P84. Residues H91 to G101 are compositionally biased toward basic residues. The span at Q111–A128 shows a compositional bias: basic and acidic residues.

It belongs to the SOFL plant protein family. In terms of tissue distribution, predominantly expressed in the vascular tissues of seedlings, developing leaves, flowers and siliques, but barely detectable in roots and stems.

The protein resides in the cytoplasm. Its subcellular location is the nucleus. In terms of biological role, involved in cytokinin-mediated development. Together with SOFL2, triggers the endogenous content of specific bioactive cytokinins derived from the biosynthetic intermediates trans-zeatin riboside monophosphate (tZRMP) and N(6)-(Delta(2)-isopentenyl)adenosine monophosphate (iPRMP) such as N-glucosides trans-zeatin 7-glucoside (tZ7G), cis-zeatin 7-glucoside (cZ7G) and N(6)-(Delta(2)-isopentenyl)adenine 7-glucoside (iP7G). This chain is Protein SOB FIVE-LIKE 1, found in Arabidopsis thaliana (Mouse-ear cress).